We begin with the raw amino-acid sequence, 409 residues long: Tyrosine--tRNA ligase (409 aa).

Tyr39 contacts L-tyrosine. A 'HIGH' region motif is present at residues 44–53; sequence PTAASLHVGS. Positions 176 and 180 each coordinate L-tyrosine. Residues 236 to 240 carry the 'KMSKS' region motif; the sequence is KMGKT. Position 239 (Lys239) interacts with ATP. Residues 346–408 enclose the S4 RNA-binding domain; the sequence is ISLVDALVGL…GKKAHGVIQA (63 aa).

The protein belongs to the class-I aminoacyl-tRNA synthetase family. TyrS type 1 subfamily. In terms of assembly, homodimer.

Its subcellular location is the cytoplasm. It catalyses the reaction tRNA(Tyr) + L-tyrosine + ATP = L-tyrosyl-tRNA(Tyr) + AMP + diphosphate + H(+). In terms of biological role, catalyzes the attachment of tyrosine to tRNA(Tyr) in a two-step reaction: tyrosine is first activated by ATP to form Tyr-AMP and then transferred to the acceptor end of tRNA(Tyr). The polypeptide is Tyrosine--tRNA ligase (Zymomonas mobilis subsp. mobilis (strain ATCC 31821 / ZM4 / CP4)).